A 226-amino-acid chain; its full sequence is 3-dehydroquinate dehydratase (226 aa).

Residues 30–32 (EWR) and Arg-62 each bind 3-dehydroquinate. The Proton donor/acceptor role is filled by His-118. Lys-143 (schiff-base intermediate with substrate) is an active-site residue. 3 residues coordinate 3-dehydroquinate: Arg-186, Ser-205, and Gln-209.

It belongs to the type-I 3-dehydroquinase family. Homodimer.

The enzyme catalyses 3-dehydroquinate = 3-dehydroshikimate + H2O. Its pathway is metabolic intermediate biosynthesis; chorismate biosynthesis; chorismate from D-erythrose 4-phosphate and phosphoenolpyruvate: step 3/7. In terms of biological role, involved in the third step of the chorismate pathway, which leads to the biosynthesis of aromatic amino acids. Catalyzes the cis-dehydration of 3-dehydroquinate (DHQ) and introduces the first double bond of the aromatic ring to yield 3-dehydroshikimate. The chain is 3-dehydroquinate dehydratase from Streptococcus equi subsp. zooepidemicus (strain H70).